A 136-amino-acid polypeptide reads, in one-letter code: Large-conductance mechanosensitive channel (136 aa).

The next 2 membrane-spanning stretches (helical) occupy residues 10-30 (FAMRGNVVDLAVGVIIGAAFG) and 76-96 (GVFIQNVFDFLIVAFAIFMAI).

Belongs to the MscL family. As to quaternary structure, homopentamer.

It localises to the cell inner membrane. Functionally, channel that opens in response to stretch forces in the membrane lipid bilayer. May participate in the regulation of osmotic pressure changes within the cell. The chain is Large-conductance mechanosensitive channel from Shigella boydii serotype 18 (strain CDC 3083-94 / BS512).